The primary structure comprises 426 residues: 3-phosphoshikimate 1-carboxyvinyltransferase (426 aa).

Positions 22, 23, and 27 each coordinate 3-phosphoshikimate. A phosphoenolpyruvate-binding site is contributed by Lys-22. Residues Gly-96 and Arg-124 each coordinate phosphoenolpyruvate. Ser-170, Ser-171, Gln-172, Ser-198, Asp-314, Asn-337, and Lys-341 together coordinate 3-phosphoshikimate. Gln-172 is a phosphoenolpyruvate binding site. The Proton acceptor role is filled by Asp-314. Residues Arg-345, Arg-387, and Lys-412 each coordinate phosphoenolpyruvate.

Belongs to the EPSP synthase family. In terms of assembly, monomer.

The protein resides in the cytoplasm. The enzyme catalyses 3-phosphoshikimate + phosphoenolpyruvate = 5-O-(1-carboxyvinyl)-3-phosphoshikimate + phosphate. It functions in the pathway metabolic intermediate biosynthesis; chorismate biosynthesis; chorismate from D-erythrose 4-phosphate and phosphoenolpyruvate: step 6/7. Its function is as follows. Catalyzes the transfer of the enolpyruvyl moiety of phosphoenolpyruvate (PEP) to the 5-hydroxyl of shikimate-3-phosphate (S3P) to produce enolpyruvyl shikimate-3-phosphate and inorganic phosphate. This is 3-phosphoshikimate 1-carboxyvinyltransferase from Shewanella sp. (strain W3-18-1).